The following is a 164-amino-acid chain: Small ribosomal subunit protein uS9 (164 aa).

It belongs to the universal ribosomal protein uS9 family.

In Rickettsia bellii (strain OSU 85-389), this protein is Small ribosomal subunit protein uS9.